A 297-amino-acid polypeptide reads, in one-letter code: Myozenin-1 (297 aa).

Residues 1 to 34 (MPLSGTPAPNKKRKSSKLIMELTGGGQESSGLNL) form a disordered region. Ser82 carries the post-translational modification Phosphoserine. Positions 105 to 172 (FSYSKSSGGG…ALPDNQAGGE (68 aa)) are disordered. Over residues 118–128 (RSGSAGQYGSD) the composition is skewed to low complexity. Residues 136–162 (SGSGSGSGSGPGSGGAGGPGGHSGRGG) are compositionally biased toward gly residues.

The protein belongs to the myozenin family. Interacts with ACTN2, ACTN3, FLNA, FLNB, FLNC, LDB3, PPP3CA and TCAP. Interacts via its C-terminal region with MYOT.

It is found in the nucleus. Its subcellular location is the cell projection. The protein resides in the pseudopodium. Functionally, myozenins may serve as intracellular binding proteins involved in linking Z-disk proteins such as alpha-actinin, gamma-filamin, TCAP/telethonin, LDB3/ZASP and localizing calcineurin signaling to the sarcomere. Plays an important role in the modulation of calcineurin signaling. May play a role in myofibrillogenesis. The protein is Myozenin-1 (MYOZ1) of Bos taurus (Bovine).